Here is a 138-residue protein sequence, read N- to C-terminus: Small ribosomal subunit protein uS11 (138 aa).

Over residues 1-12 (MAPKKPGAAGPK) the composition is skewed to low complexity. Disordered stretches follow at residues 1–27 (MAPKKPGAAGPKKAQKTRRREKKNVPH) and 119–138 (ISDVTPQPHNGCRPPKRRRV). The span at 13-22 (KAQKTRRREK) shows a compositional bias: basic residues.

Belongs to the universal ribosomal protein uS11 family. Part of the 30S ribosomal subunit. Interacts with proteins S7 and S18. Binds to IF-3.

In terms of biological role, located on the platform of the 30S subunit, it bridges several disparate RNA helices of the 16S rRNA. Forms part of the Shine-Dalgarno cleft in the 70S ribosome. This Mycobacteroides abscessus (strain ATCC 19977 / DSM 44196 / CCUG 20993 / CIP 104536 / JCM 13569 / NCTC 13031 / TMC 1543 / L948) (Mycobacterium abscessus) protein is Small ribosomal subunit protein uS11.